A 397-amino-acid polypeptide reads, in one-letter code: Subtilisin-like serine protease Pen c 1 (397 aa).

Residues 1–19 (MGFLKVLATSLATLAVVDA) form the signal peptide. Positions 20–115 (GTLLTASNTD…IEPDMIVNAT (96 aa)) are cleaved as a propeptide — removed in mature form. The Inhibitor I9 domain maps to 35–113 (SYIVVMNDDV…KYIEPDMIVN (79 aa)). One can recognise a Peptidase S8 domain in the interval 125–397 (SWGLARISSK…SKLLYNGINV (273 aa)). Residues Asp-157, His-188, and Ser-343 each act as charge relay system in the active site.

This sequence belongs to the peptidase S8 family.

The protein resides in the secreted. Its activity is regulated as follows. Inhibited by 0.1 mM diisopropyl fluorophosphate (DFP), phenylmethanesulfonyl fluoride (PMSF), chymostatin and elastatinal. Not inhibited by N-alpha-p-tosyl-L-lysine chloromethylketone (TLCK), N-tosyl-L-phenylalanyl chloromethyl ketone (TPCK) or N-carbobenzoxy-L-phenylalanine chloromethylketone (ZPCK). Its function is as follows. Serine protease. Hydrolyzes azocasein. Cleaves peptide bonds of the oxidized insulin B chain preferably at 15-Leu-|-Tyr-16, but also at 4-Gln-|-His-5 and 24-Phe-|-Phe-25, and to a lesser extent at 5-His-|-Leu-6 and 25-Phe-|-Tyr-26. Hydrolyzes amide bonds between amino acids and 7-amino-4-methylcoumarin (AMC) in vitro. The polypeptide is Subtilisin-like serine protease Pen c 1 (Penicillium citrinum).